Here is a 487-residue protein sequence, read N- to C-terminus: N-succinylglutamate 5-semialdehyde dehydrogenase (487 aa).

Residue 221-226 (GSSDTG) coordinates NAD(+). Catalysis depends on residues glutamate 244 and cysteine 278.

It belongs to the aldehyde dehydrogenase family. AstD subfamily.

It catalyses the reaction N-succinyl-L-glutamate 5-semialdehyde + NAD(+) + H2O = N-succinyl-L-glutamate + NADH + 2 H(+). The protein operates within amino-acid degradation; L-arginine degradation via AST pathway; L-glutamate and succinate from L-arginine: step 4/5. Its function is as follows. Catalyzes the NAD-dependent reduction of succinylglutamate semialdehyde into succinylglutamate. The polypeptide is N-succinylglutamate 5-semialdehyde dehydrogenase (Paraburkholderia xenovorans (strain LB400)).